Consider the following 219-residue polypeptide: Large ribosomal subunit protein bL25 (219 aa).

Positions 188 to 219 (TVAAPADTAVQPESSSTKGKKDEDGALAKDKK) are disordered. Positions 206-219 (GKKDEDGALAKDKK) are enriched in basic and acidic residues.

The protein belongs to the bacterial ribosomal protein bL25 family. CTC subfamily. As to quaternary structure, part of the 50S ribosomal subunit; part of the 5S rRNA/L5/L18/L25 subcomplex. Contacts the 5S rRNA. Binds to the 5S rRNA independently of L5 and L18.

Its function is as follows. This is one of the proteins that binds to the 5S RNA in the ribosome where it forms part of the central protuberance. In Elusimicrobium minutum (strain Pei191), this protein is Large ribosomal subunit protein bL25.